The primary structure comprises 62 residues: Dual specificity mitogen-activated protein kinase kinase 3 (62 aa).

The region spanning 1-62 (GKIAVSIVKA…VAKTMDAGCK (62 aa)) is the Protein kinase domain.

This sequence belongs to the protein kinase superfamily. STE Ser/Thr protein kinase family. MAP kinase kinase subfamily. Activated by phosphorylation on Ser/Thr catalyzed by MAP kinase kinase kinases.

It catalyses the reaction L-seryl-[protein] + ATP = O-phospho-L-seryl-[protein] + ADP + H(+). The enzyme catalyses L-threonyl-[protein] + ATP = O-phospho-L-threonyl-[protein] + ADP + H(+). The catalysed reaction is L-tyrosyl-[protein] + ATP = O-phospho-L-tyrosyl-[protein] + ADP + H(+). Catalyzes the concomitant phosphorylation of a threonine and a tyrosine residue in a Thr-Glu-Tyr sequence located in MAP kinases. In Xenopus laevis (African clawed frog), this protein is Dual specificity mitogen-activated protein kinase kinase 3 (map2k3).